A 453-amino-acid chain; its full sequence is Probable glycine dehydrogenase (decarboxylating) subunit 1 (453 aa).

The protein belongs to the GcvP family. N-terminal subunit subfamily. As to quaternary structure, the glycine cleavage system is composed of four proteins: P, T, L and H. In this organism, the P 'protein' is a heterodimer of two subunits.

The catalysed reaction is N(6)-[(R)-lipoyl]-L-lysyl-[glycine-cleavage complex H protein] + glycine + H(+) = N(6)-[(R)-S(8)-aminomethyldihydrolipoyl]-L-lysyl-[glycine-cleavage complex H protein] + CO2. Its function is as follows. The glycine cleavage system catalyzes the degradation of glycine. The P protein binds the alpha-amino group of glycine through its pyridoxal phosphate cofactor; CO(2) is released and the remaining methylamine moiety is then transferred to the lipoamide cofactor of the H protein. This Dictyoglomus thermophilum (strain ATCC 35947 / DSM 3960 / H-6-12) protein is Probable glycine dehydrogenase (decarboxylating) subunit 1.